Consider the following 130-residue polypeptide: Small ribosomal subunit protein uS8 (130 aa).

The protein belongs to the universal ribosomal protein uS8 family. In terms of assembly, part of the 30S ribosomal subunit.

Functionally, one of the primary rRNA binding proteins, it binds directly to 16S rRNA central domain where it helps coordinate assembly of the platform of the 30S subunit. This Methanosphaera stadtmanae (strain ATCC 43021 / DSM 3091 / JCM 11832 / MCB-3) protein is Small ribosomal subunit protein uS8.